Reading from the N-terminus, the 134-residue chain is 6,7-dimethyl-8-ribityllumazine synthase (134 aa).

Residues Phe11, 43–45 (AYD), and 67–69 (AIV) contribute to the 5-amino-6-(D-ribitylamino)uracil site. 72 to 73 (DT) contributes to the (2S)-2-hydroxy-3-oxobutyl phosphate binding site. The Proton donor role is filled by His75. Residue Phe100 participates in 5-amino-6-(D-ribitylamino)uracil binding. (2S)-2-hydroxy-3-oxobutyl phosphate is bound at residue Arg115.

It belongs to the DMRL synthase family.

It catalyses the reaction (2S)-2-hydroxy-3-oxobutyl phosphate + 5-amino-6-(D-ribitylamino)uracil = 6,7-dimethyl-8-(1-D-ribityl)lumazine + phosphate + 2 H2O + H(+). It functions in the pathway cofactor biosynthesis; riboflavin biosynthesis; riboflavin from 2-hydroxy-3-oxobutyl phosphate and 5-amino-6-(D-ribitylamino)uracil: step 1/2. Catalyzes the formation of 6,7-dimethyl-8-ribityllumazine by condensation of 5-amino-6-(D-ribitylamino)uracil with 3,4-dihydroxy-2-butanone 4-phosphate. This is the penultimate step in the biosynthesis of riboflavin. In Halorubrum lacusprofundi (strain ATCC 49239 / DSM 5036 / JCM 8891 / ACAM 34), this protein is 6,7-dimethyl-8-ribityllumazine synthase.